Consider the following 196-residue polypeptide: ATP-dependent Clp protease proteolytic subunit 1 (196 aa).

S96 serves as the catalytic Nucleophile. The active site involves H121.

It belongs to the peptidase S14 family. In terms of assembly, fourteen ClpP subunits assemble into 2 heptameric rings which stack back to back to give a disk-like structure with a central cavity, resembling the structure of eukaryotic proteasomes.

It localises to the cytoplasm. The enzyme catalyses Hydrolysis of proteins to small peptides in the presence of ATP and magnesium. alpha-casein is the usual test substrate. In the absence of ATP, only oligopeptides shorter than five residues are hydrolyzed (such as succinyl-Leu-Tyr-|-NHMec, and Leu-Tyr-Leu-|-Tyr-Trp, in which cleavage of the -Tyr-|-Leu- and -Tyr-|-Trp bonds also occurs).. Cleaves peptides in various proteins in a process that requires ATP hydrolysis. Has a chymotrypsin-like activity. Plays a major role in the degradation of misfolded proteins. The sequence is that of ATP-dependent Clp protease proteolytic subunit 1 from Prochlorococcus marinus (strain SARG / CCMP1375 / SS120).